The primary structure comprises 418 residues: 26S proteasome regulatory subunit 6B (418 aa).

The residue at position 1 (M1) is an N-acetylmethionine. At S21 the chain carries Phosphoserine. T25 carries the post-translational modification Phosphothreonine. S28 bears the Phosphoserine mark. An ATP-binding site is contributed by 206–213 (GPPGCGKT). Residues K397 and K401 each carry the N6-acetyllysine modification.

This sequence belongs to the AAA ATPase family. In terms of assembly, component of the 19S proteasome regulatory particle complex. The 26S proteasome consists of a 20S core particle (CP) and two 19S regulatory subunits (RP). The regulatory particle is made of a lid composed of 9 subunits, a base containing 6 ATPases including PSMC4 and few additional components. Interacts with NR1I3. Interacts with PAAF1. Interacts with TRIM5. Interacts with ZFAND1.

The protein localises to the cytoplasm. It localises to the nucleus. Its function is as follows. Component of the 26S proteasome, a multiprotein complex involved in the ATP-dependent degradation of ubiquitinated proteins. This complex plays a key role in the maintenance of protein homeostasis by removing misfolded or damaged proteins, which could impair cellular functions, and by removing proteins whose functions are no longer required. Therefore, the proteasome participates in numerous cellular processes, including cell cycle progression, apoptosis, or DNA damage repair. PSMC4 belongs to the heterohexameric ring of AAA (ATPases associated with diverse cellular activities) proteins that unfolds ubiquitinated target proteins that are concurrently translocated into a proteolytic chamber and degraded into peptides. This Mus musculus (Mouse) protein is 26S proteasome regulatory subunit 6B (Psmc4).